The sequence spans 218 residues: MSLGLIGRKVGMTRLFTDEGEAIPVTVIDVSDNRVAQIKTQATNGYDAIQLAHGTRRATRVTKAMAGHFAKAGVMAGNALNEFHLDAAKIAEMTPGQVIPAETAFTAGQKVDVQGVTIGKGYAGTIKRYHFASGRASHGNSRSHNVPGSIGMAQDPGRVFPGKRMTGHLGDITRTVQNLVIARIDAERNLIMVKGAIPGAPGGKVIVTPAVKTPLKKK.

The tract at residues 134-154 (GRASHGNSRSHNVPGSIGMAQ) is disordered. At Q154 the chain carries N5-methylglutamine.

The protein belongs to the universal ribosomal protein uL3 family. In terms of assembly, part of the 50S ribosomal subunit. Forms a cluster with proteins L14 and L19. In terms of processing, methylated by PrmB.

In terms of biological role, one of the primary rRNA binding proteins, it binds directly near the 3'-end of the 23S rRNA, where it nucleates assembly of the 50S subunit. This chain is Large ribosomal subunit protein uL3, found in Polynucleobacter necessarius subsp. necessarius (strain STIR1).